The following is an 88-amino-acid chain: Large ribosomal subunit protein bL27 (88 aa).

The tract at residues 1–23 (MAHKKAGGSSRNGRDSAGRRLGV) is disordered.

It belongs to the bacterial ribosomal protein bL27 family.

This is Large ribosomal subunit protein bL27 from Methylorubrum populi (strain ATCC BAA-705 / NCIMB 13946 / BJ001) (Methylobacterium populi).